The sequence spans 696 residues: D-(-)-3-hydroxybutyrate oligomer hydrolase (696 aa).

Positions 1–26 (MDTHGWGSRILVGAALAALTMLGACN) are cleaved as a signal peptide. The active-site Charge relay system is the S309.

This sequence belongs to the D-(-)-3-hydroxybutyrate oligomer hydrolase family.

The protein localises to the secreted. It catalyses the reaction (3R)-hydroxybutanoate dimer + H2O = 2 (R)-3-hydroxybutanoate + H(+). Its pathway is lipid metabolism; butanoate metabolism. Its function is as follows. Participates in the degradation of poly-3-hydroxybutyrate (PHB). It works downstream of poly(3-hydroxybutyrate) depolymerase, hydrolyzing D(-)-3-hydroxybutyrate oligomers of various length (3HB-oligomers) into 3HB-monomers. The protein is D-(-)-3-hydroxybutyrate oligomer hydrolase of Burkholderia vietnamiensis (strain G4 / LMG 22486) (Burkholderia cepacia (strain R1808)).